A 167-amino-acid chain; its full sequence is Peptide deformylase (167 aa).

Residues C90 and H132 each coordinate Fe cation. E133 is an active-site residue. H136 contacts Fe cation.

The protein belongs to the polypeptide deformylase family. Requires Fe(2+) as cofactor.

It carries out the reaction N-terminal N-formyl-L-methionyl-[peptide] + H2O = N-terminal L-methionyl-[peptide] + formate. Removes the formyl group from the N-terminal Met of newly synthesized proteins. Requires at least a dipeptide for an efficient rate of reaction. N-terminal L-methionine is a prerequisite for activity but the enzyme has broad specificity at other positions. This Dehalococcoides mccartyi (strain ATCC BAA-2100 / JCM 16839 / KCTC 5957 / BAV1) protein is Peptide deformylase.